A 57-amino-acid polypeptide reads, in one-letter code: Large ribosomal subunit protein bL32 (57 aa).

Belongs to the bacterial ribosomal protein bL32 family.

The protein is Large ribosomal subunit protein bL32 of Bacillus pumilus (strain SAFR-032).